A 408-amino-acid chain; its full sequence is Aspartate aminotransferase (408 aa).

3 residues coordinate L-aspartate: Gly45, Trp134, and Asn184. Lys247 is modified (N6-(pyridoxal phosphate)lysine). Position 382 (Arg382) interacts with L-aspartate.

This sequence belongs to the class-I pyridoxal-phosphate-dependent aminotransferase family. Homodimer. Pyridoxal 5'-phosphate is required as a cofactor.

Its subcellular location is the cytoplasm. The catalysed reaction is L-aspartate + 2-oxoglutarate = oxaloacetate + L-glutamate. Its function is as follows. Catalyzes the reversible conversion of aspartate and 2-oxoglutarate to glutamate and oxaloacetate. Does not have prephenate aminotransferase activity. The sequence is that of Aspartate aminotransferase from Streptomyces avermitilis (strain ATCC 31267 / DSM 46492 / JCM 5070 / NBRC 14893 / NCIMB 12804 / NRRL 8165 / MA-4680).